A 247-amino-acid chain; its full sequence is 3-deoxy-manno-octulosonate cytidylyltransferase (247 aa).

The protein belongs to the KdsB family.

Its subcellular location is the cytoplasm. The catalysed reaction is 3-deoxy-alpha-D-manno-oct-2-ulosonate + CTP = CMP-3-deoxy-beta-D-manno-octulosonate + diphosphate. The protein operates within nucleotide-sugar biosynthesis; CMP-3-deoxy-D-manno-octulosonate biosynthesis; CMP-3-deoxy-D-manno-octulosonate from 3-deoxy-D-manno-octulosonate and CTP: step 1/1. Its pathway is bacterial outer membrane biogenesis; lipopolysaccharide biosynthesis. Activates KDO (a required 8-carbon sugar) for incorporation into bacterial lipopolysaccharide in Gram-negative bacteria. The protein is 3-deoxy-manno-octulosonate cytidylyltransferase of Methylobacterium sp. (strain 4-46).